A 202-amino-acid polypeptide reads, in one-letter code: Peptide deformylase (202 aa).

Residues 1 to 24 (MAGSFAQLAKNAEKKKPSISVSKE) form a disordered region. Fe cation contacts are provided by cysteine 121 and histidine 163. Glutamate 164 is an active-site residue. Histidine 167 contributes to the Fe cation binding site.

This sequence belongs to the polypeptide deformylase family. Requires Fe(2+) as cofactor.

The catalysed reaction is N-terminal N-formyl-L-methionyl-[peptide] + H2O = N-terminal L-methionyl-[peptide] + formate. Its function is as follows. Removes the formyl group from the N-terminal Met of newly synthesized proteins. Requires at least a dipeptide for an efficient rate of reaction. N-terminal L-methionine is a prerequisite for activity but the enzyme has broad specificity at other positions. The protein is Peptide deformylase of Prochlorococcus marinus (strain NATL2A).